The primary structure comprises 60 residues: Cytotoxin 3 (60 aa).

Intrachain disulfides connect cysteine 3-cysteine 21, cysteine 14-cysteine 38, cysteine 42-cysteine 53, and cysteine 54-cysteine 59.

It belongs to the three-finger toxin family. Short-chain subfamily. Type IA cytotoxin sub-subfamily. As to quaternary structure, monomer in solution; Homodimer and oligomer in the presence of negatively charged lipids forming a pore with a size ranging between 20 and 30 Angstroms. In terms of tissue distribution, expressed by the venom gland.

It is found in the secreted. It localises to the target cell membrane. Shows cytolytic activity on many different cells by forming pore in lipid membranes. In vivo, increases heart rate or kills the animal by cardiac arrest. In addition, it binds to heparin with high affinity, interacts with Kv channel-interacting protein 1 (KCNIP1) in a calcium-independent manner, and binds to integrin alpha-V/beta-3 (ITGAV/ITGB3) with moderate affinity. This is Cytotoxin 3 from Naja annulifera (Banded Egyptian cobra).